The sequence spans 73 residues: Large ribosomal subunit protein bL31 (73 aa).

The protein belongs to the bacterial ribosomal protein bL31 family. Type A subfamily. As to quaternary structure, part of the 50S ribosomal subunit.

Functionally, binds the 23S rRNA. The polypeptide is Large ribosomal subunit protein bL31 (rpmE) (Jannaschia sp. (strain CCS1)).